The primary structure comprises 165 residues: Phosphopantetheine adenylyltransferase (165 aa).

This sequence belongs to the eukaryotic CoaD family.

Its subcellular location is the cytoplasm. It catalyses the reaction (R)-4'-phosphopantetheine + ATP + H(+) = 3'-dephospho-CoA + diphosphate. It functions in the pathway cofactor biosynthesis; coenzyme A biosynthesis. In terms of biological role, reversibly transfers an adenylyl group from ATP to 4'-phosphopantetheine, yielding dephospho-CoA (dPCoA) and pyrophosphate. The sequence is that of Phosphopantetheine adenylyltransferase from Thermococcus kodakarensis (strain ATCC BAA-918 / JCM 12380 / KOD1) (Pyrococcus kodakaraensis (strain KOD1)).